Reading from the N-terminus, the 1066-residue chain is E3 ubiquitin-protein ligase PDZRN3 (1066 aa).

An RING-type; degenerate zinc finger spans residues C18 to C56. The TRAF-type zinc finger occupies E100 to G158. 2 PDZ domains span residues T249–T339 and E419–P503. Phosphoserine is present on S427. Residues Q545–Q603 form a disordered region. Polar residues predominate over residues T554 to N563. The segment covering Q564–E582 has biased composition (basic and acidic residues). Over residues T594–Q603 the composition is skewed to polar residues. The stretch at E679 to R704 forms a coiled coil. The span at T744–S754 shows a compositional bias: basic and acidic residues. Disordered stretches follow at residues T744–S778 and L808–Y863. 2 stretches are compositionally biased toward polar residues: residues S755–L769 and G845–L855. The stretch at K975–M1025 forms a coiled coil.

Interacts with NLGN1 and EFNB2. Interacts with UBE2D2 and with MUSK via the first PDZ domain. In terms of processing, auto-ubiquitinated. Widely expressed, including in the heart, skeletal muscle and liver and, at lower levels, in the brain, colon, small intestine, placenta and lung. Down-regulated in ovarian serous papillary tumors.

The protein resides in the synapse. Its subcellular location is the cytoplasm. It carries out the reaction S-ubiquitinyl-[E2 ubiquitin-conjugating enzyme]-L-cysteine + [acceptor protein]-L-lysine = [E2 ubiquitin-conjugating enzyme]-L-cysteine + N(6)-ubiquitinyl-[acceptor protein]-L-lysine.. The protein operates within protein modification; protein ubiquitination. Functionally, E3 ubiquitin-protein ligase. Plays an important role in regulating the surface level of MUSK on myotubes. Mediates the ubiquitination of MUSK, promoting its endocytosis and lysosomal degradation. Might contribute to terminal myogenic differentiation. This chain is E3 ubiquitin-protein ligase PDZRN3 (PDZRN3), found in Homo sapiens (Human).